Reading from the N-terminus, the 195-residue chain is Interferon tau-8 (195 aa).

Positions 1–23 (MAFVLSLLMALVLVSYGPGGSLG) are cleaved as a signal peptide. Disulfide bonds link cysteine 24–cysteine 122 and cysteine 52–cysteine 162.

It belongs to the alpha/beta interferon family. IFN-alphaII subfamily. Constitutively and exclusively expressed in the mononuclear cells of the extraembryonic trophectoderm.

The protein resides in the secreted. Its function is as follows. Paracrine hormone primarily responsible for maternal recognition of pregnancy. Interacts with endometrial receptors, probably type I interferon receptors, and blocks estrogen receptor expression, preventing the estrogen-induced increase in oxytocin receptor expression in the endometrium. This results in the suppression of the pulsatile endometrial release of the luteolytic hormone prostaglandin F2-alpha, hindering the regression of the corpus luteum (luteolysis) and therefore a return to ovarian cyclicity. This, and a possible direct effect of IFN-tau on prostaglandin synthesis, leads in turn to continued ovarian progesterone secretion, which stimulates the secretion by the endometrium of the nutrients required for the growth of the conceptus. In summary, displays particularly high antiviral and antiproliferative potency concurrently with particular weak cytotoxicity, high antiluteolytic activity and immunomodulatory properties. In contrast with other IFNs, IFN-tau is not virally inducible. This is Interferon tau-8 (IFNT8) from Ovis aries (Sheep).